We begin with the raw amino-acid sequence, 155 residues long: 6,7-dimethyl-8-ribityllumazine synthase (155 aa).

Residues Phe24, Ala58–Glu60, and Ala82–Ile84 each bind 5-amino-6-(D-ribitylamino)uracil. Ser87 to Thr88 provides a ligand contact to (2S)-2-hydroxy-3-oxobutyl phosphate. His90 acts as the Proton donor in catalysis. Phe115 provides a ligand contact to 5-amino-6-(D-ribitylamino)uracil. Arg129 provides a ligand contact to (2S)-2-hydroxy-3-oxobutyl phosphate.

This sequence belongs to the DMRL synthase family.

The catalysed reaction is (2S)-2-hydroxy-3-oxobutyl phosphate + 5-amino-6-(D-ribitylamino)uracil = 6,7-dimethyl-8-(1-D-ribityl)lumazine + phosphate + 2 H2O + H(+). Its pathway is cofactor biosynthesis; riboflavin biosynthesis; riboflavin from 2-hydroxy-3-oxobutyl phosphate and 5-amino-6-(D-ribitylamino)uracil: step 1/2. In terms of biological role, catalyzes the formation of 6,7-dimethyl-8-ribityllumazine by condensation of 5-amino-6-(D-ribitylamino)uracil with 3,4-dihydroxy-2-butanone 4-phosphate. This is the penultimate step in the biosynthesis of riboflavin. The chain is 6,7-dimethyl-8-ribityllumazine synthase from Acetivibrio thermocellus (strain ATCC 27405 / DSM 1237 / JCM 9322 / NBRC 103400 / NCIMB 10682 / NRRL B-4536 / VPI 7372) (Clostridium thermocellum).